We begin with the raw amino-acid sequence, 139 residues long: Maintenance of telomere capping protein 7 (139 aa).

The next 2 helical transmembrane spans lie at 13–33 (SHHVLFAEPGFFLCNFFFVLL) and 42–62 (FYFLFILLFIIYIAIIYFVFI). Residues 94–121 (RSVANPALPPQKKKKKKKKGTLRTGEVE) are disordered. Basic residues predominate over residues 104 to 114 (QKKKKKKKKGT).

The protein resides in the membrane. In terms of biological role, may be involved in telomere capping. This Saccharomyces cerevisiae (strain ATCC 204508 / S288c) (Baker's yeast) protein is Maintenance of telomere capping protein 7 (MTC7).